The chain runs to 346 residues: Alkylated DNA repair protein ALKBH8 homolog (346 aa).

The tract at residues 1–21 (MVQPRFVRPTQSSPSSISGEP) is disordered. The segment covering 12–21 (SSPSSISGEP) has biased composition (low complexity). The RRM domain occupies 24–102 (SNLYVANCGP…RSLHIRYSVL (79 aa)). The 121-residue stretch at 208-328 (NLDQLTVNEY…RVSFTLRKVR (121 aa)) folds into the Fe2OG dioxygenase domain. 3 residues coordinate Fe cation: histidine 226, aspartate 228, and histidine 298. Arginine 319 and arginine 325 together coordinate 2-oxoglutarate.

It belongs to the alkB family. Fe(2+) serves as cofactor.

Its function is as follows. Binds tRNA and catalyzes the iron and alpha-ketoglutarate dependent hydroxylation of 5-methylcarboxymethyl uridine at the wobble position of the anticodon loop in tRNA via its dioxygenase domain, giving rise to 5-(S)-methoxycarbonylhydroxymethyluridine. The chain is Alkylated DNA repair protein ALKBH8 homolog from Arabidopsis thaliana (Mouse-ear cress).